A 160-amino-acid polypeptide reads, in one-letter code: Protein YpjC (160 aa).

The polypeptide is Protein YpjC (ypjC) (Escherichia coli (strain K12)).